The sequence spans 311 residues: Nuclear hormone receptor family member nhr-111 (311 aa).

Positions 39–115 (ITLCAVCGDT…KGMNKNAVQP (77 aa)) form a DNA-binding region, nuclear receptor. 2 consecutive NR C4-type zinc fingers follow at residues 42–62 (CAVCGDTSNGNHYGVPTCFGC) and 78–98 (CWNGDGNCVIDKANRNRCKSC). The 196-residue stretch at 116–311 (ERTSHSYTVE…KACEIVISFL (196 aa)) folds into the NR LBD domain.

The protein belongs to the nuclear hormone receptor family.

The protein resides in the nucleus. Orphan nuclear receptor. The sequence is that of Nuclear hormone receptor family member nhr-111 (nhr-111) from Caenorhabditis elegans.